The sequence spans 183 residues: MSAITPYDWAIIAFVIGVTFLCVFMLTVPLLLGGKSWGRAKQEQFESGVVSAGGARIRLSAKFYLVAIFFVVFDLEALYLYAWSTSVREVGWLGYTTVVIFVVDLLIALVYAFSVGALSWAPADRRKLAGEKIKVGSPTMNIAEITRFNSIEELVTDPTGQIPAQSSGRVKSKTTPALSSEKE.

The next 3 membrane-spanning stretches (helical) occupy residues 11-31, 63-83, and 98-118; these read IIAFVIGVTFLCVFMLTVPLL, FYLVAIFFVVFDLEALYLYAW, and VVIFVVDLLIALVYAFSVGAL. The tract at residues 159–183 is disordered; the sequence is TGQIPAQSSGRVKSKTTPALSSEKE.

This sequence belongs to the complex I subunit 3 family. In terms of assembly, NDH-1 is composed of 14 different subunits. Subunits NuoA, H, J, K, L, M, N constitute the membrane sector of the complex.

The protein localises to the cell inner membrane. It catalyses the reaction a quinone + NADH + 5 H(+)(in) = a quinol + NAD(+) + 4 H(+)(out). Its function is as follows. NDH-1 shuttles electrons from NADH, via FMN and iron-sulfur (Fe-S) centers, to quinones in the respiratory chain. The immediate electron acceptor for the enzyme in this species is believed to be ubiquinone. Couples the redox reaction to proton translocation (for every two electrons transferred, four hydrogen ions are translocated across the cytoplasmic membrane), and thus conserves the redox energy in a proton gradient. The chain is NADH-quinone oxidoreductase subunit A from Acinetobacter baumannii (strain ACICU).